A 304-amino-acid polypeptide reads, in one-letter code: Oxygen-dependent coproporphyrinogen-III oxidase (304 aa).

A substrate-binding site is contributed by Ser-94. 2 residues coordinate a divalent metal cation: His-98 and His-108. The active-site Proton donor is His-108. Residue 110 to 112 (NVR) coordinates substrate. Residues His-147 and His-177 each contribute to the a divalent metal cation site. The segment at 242–277 (YVEFNLVYDRGTLFGLQTGGRTESILMSMPPLVRWE) is important for dimerization. 260 to 262 (GGR) is a binding site for substrate.

It belongs to the aerobic coproporphyrinogen-III oxidase family. As to quaternary structure, homodimer. A divalent metal cation serves as cofactor.

The protein localises to the cytoplasm. It catalyses the reaction coproporphyrinogen III + O2 + 2 H(+) = protoporphyrinogen IX + 2 CO2 + 2 H2O. It participates in porphyrin-containing compound metabolism; protoporphyrin-IX biosynthesis; protoporphyrinogen-IX from coproporphyrinogen-III (O2 route): step 1/1. Its function is as follows. Involved in the heme biosynthesis. Catalyzes the aerobic oxidative decarboxylation of propionate groups of rings A and B of coproporphyrinogen-III to yield the vinyl groups in protoporphyrinogen-IX. The chain is Oxygen-dependent coproporphyrinogen-III oxidase from Shewanella pealeana (strain ATCC 700345 / ANG-SQ1).